The primary structure comprises 34 residues: Leader peptide SpeFL (34 aa).

A sensor domain region spans residues 1–13 (MENNSRTMPHIRR). The Ornithine recognition loop signature appears at 10–16 (HIRRTTH). Arginine 13 contributes to the L-ornithine binding site. Positions 14 to 34 (TTHIMKFAHRNSFDFHFFNAR) are effector domain.

It belongs to the speF operon leader peptide family. As to quaternary structure, binds ornithine in stalled 70S ribosomes, blocking the upper two-thirds of the exit tunnel. Contacts 23S rRNA and ribosomal proteins L4 and L22.

Functionally, a small protein (arrest peptide) encoded upstream of inducible ornithine carboxylase gene (speF) that controls expression of downstream genes (speF and patE) by nascent chain-translational arrest and transcriptional attenuation. In the presence of ornithine a toeprint due to ribosomal arrest can be seen on the speFL transcript. Only L-ornithine (not other tested amino acids) has this effect. It is thought that in the presence of ornithine, ribosomal stalling on speFL prevents binding of Rho transcription termination factor to a downstream rut site allowing transcription of the operon. In the absence of ornithine, ribosomes terminate translation and are recycled, exposing the rut site allowing Rho to bind and prematurely terminate transcription. The presence of a pair of rare Arg codons could slow down translation to prevent polysome accumulation and to expose the rut site to Rho. This is Leader peptide SpeFL from Escherichia coli (strain K12).